The primary structure comprises 338 residues: RAB6-interacting golgin (338 aa).

2 stretches are compositionally biased toward basic and acidic residues: residues Met1–Leu14 and Arg46–Arg59. 2 disordered regions span residues Met1–Asp109 and Ala127–Lys188. 2 stretches are compositionally biased toward low complexity: residues Lys60–Pro73 and Ser153–Ser167. Residues Leu192–Asp244 adopt a coiled-coil conformation. The interval Asp244–Cys260 is essential for Sas-6 binding. The tract at residues Ala246–Asn286 is necessary for localization to the centrosome. The interval Ala246–Ser323 is necessary for localization to the Golgi. Residues Cys260–Asn286 form a necessary for interaction with Sas-6 and essential for homodimerization region.

The protein belongs to the GORAB family. In terms of assembly, homodimer (via C-terminus); dimerization appears to be required for its trans-Golgi localization but not for its function and centriolar localization. Interacts (via C-terminus) with Rab6; binds Rab6 as a homodimer, this interaction seems to be required for trans-Golgi localization. Interacts (via C-terminus) with Sas-6; binds as a monomer to a Sas-6 homodimer.

Its subcellular location is the cytoplasm. The protein resides in the cytoskeleton. It is found in the microtubule organizing center. It localises to the centrosome. The protein localises to the centriole. Its subcellular location is the golgi apparatus. The protein resides in the trans-Golgi network. In terms of biological role, required for centriole duplication likely through its interaction with Sas-6. During embryogenesis, maternally provided protein is required for centrosome duplication and nuclear division cycles of the syncytial embryos. In femoral chordotonal organs, required for sensory cilia structural integrity and functionality necessary for motor coordination. In male germline, has a role in cytokinesis which seems dependent on its localization to the Golgi. The sequence is that of RAB6-interacting golgin from Drosophila melanogaster (Fruit fly).